Consider the following 355-residue polypeptide: Myricetin 7/4'-O-methyltransferase 2 (355 aa).

Aspartate 221 is an S-adenosyl-L-methionine binding site. Histidine 259 functions as the Proton acceptor in the catalytic mechanism.

The protein belongs to the class I-like SAM-binding methyltransferase superfamily. Cation-independent O-methyltransferase family. As to quaternary structure, homodimer. As to expression, mainly expressed in leaves secreting glandular trichomes types 1 and 4 and, to a lesser extent, in storage trichomes type 6.

The enzyme catalyses quercetin + S-adenosyl-L-methionine = rhamnetin + S-adenosyl-L-homocysteine + H(+). The catalysed reaction is kaempferol + S-adenosyl-L-methionine = kaempferide + S-adenosyl-L-homocysteine + H(+). It carries out the reaction myricetin + S-adenosyl-L-methionine = 7-O-methylmyricetin + S-adenosyl-L-homocysteine + H(+). It catalyses the reaction kaempferide + S-adenosyl-L-methionine = 7,4'-O-dimethylkaempferol + S-adenosyl-L-homocysteine + H(+). The enzyme catalyses isorhamnetin + S-adenosyl-L-methionine = 3',4'-O-dimethylquercetin + S-adenosyl-L-homocysteine + 2 H(+). The catalysed reaction is 3',4',5,7-tetrahydroxy-3-methoxyflavone + S-adenosyl-L-methionine = 3',4',5-trihydroxy-3,7-dimethoxyflavone + S-adenosyl-L-homocysteine + H(+). It carries out the reaction rhamnetin + S-adenosyl-L-methionine = 7,4'-O-dimethylquercetin + S-adenosyl-L-homocysteine + H(+). It catalyses the reaction syringetin + S-adenosyl-L-methionine = 7,3',5'-O-trimethylmyricetin + S-adenosyl-L-homocysteine + H(+). The enzyme catalyses 3',4',5'-O-trimethylmyricetin + S-adenosyl-L-methionine = 7,3',4',5'-O-tetramethylmyricetin + S-adenosyl-L-homocysteine. Its pathway is flavonoid metabolism. In terms of biological role, flavonoid 7/4'-O-methyltransferase involved in the biosynthesis of polymethoxylated flavonoids natural products such as myricetin derivatives, aroma compounds possessing antioxidant properties and exhibiting pharmacological activities such as anti-carcinogen, anti-viral, anti-thrombotic, anti-diabetic, anti-atherosclerotic, and anti-inflammatory effects. Catalyzes S-adenosylmethionine-dependent regioselective 7/4'-O-methylation of flavonoids; active on various hydroxylated flavonoid substrates, including myricetin, quercetin and kaempferol. Mediates the formation of 4'-methyl derivatives from kaempferol, 3'-methyl quercetin (isorhamnetin), 7-methyl quercetin (rhamnetin) and 3'-methyl myricetin, producing 4'-methyl kaempferol (kaempferide), 3',4'-dimethyl quercetin (4'-O-methyl isorhamnetin), 7,4'-dimethyl quercetin (4'-O-methyl rhamnetin, rhamnacene) and 3',4'-dimethyl myricetin, respectively. Triggers the 7-O-methylation of quercetin, myricetin, 4'-methyl kaempferol (kaempferide), 3-methyl quercetin, 3',5'-dimethyl myricetin (syringetin) and 3',4',5'-trimethyl myricetin, thus leading to production of 7-methyl quercetin (rhamnetin), 7-methyl myricetin, 7,4'-dimethyl kaempferol (7-O-methyl kaempferide), 3,7-dimethyl quercetin, 7,3',5'-trimethyl myricetin (7-O-methyl syringetin) and 7,3',4',5'-tetramethyl myricetin, respectively. The polypeptide is Myricetin 7/4'-O-methyltransferase 2 (Solanum habrochaites (Wild tomato)).